Reading from the N-terminus, the 380-residue chain is Ceramide synthase 2 (380 aa).

Residues 1–40 (MLQTLYDYFWWERLWLPVNLTWADLEDKDGRVYAKASDLY) are Lumenal-facing. Residue Asn19 is glycosylated (N-linked (GlcNAc...) asparagine). A helical transmembrane segment spans residues 41-61 (ITLPLALLFLVIRYFFELYVA). Positions 67–128 (LLNVKEKTRL…RRRRNQDRPS (62 aa)) are homeobox-like. The region spanning 131–332 (KKFREASWRF…ILRMAHKFIT (202 aa)) is the TLC domain. Helical transmembrane passes span 140–160 (FTYYLIAFVAGMAVTVDKPWF), 175–195 (IIPSQYWYYMIELSFYWSLLF), 209–229 (QIIHHVATIILLCFSWFANYV), and 264–284 (LFIVFAIVFIITRLVIMPFWI). A Last loop motif motif is present at residues 291-300 (YPLELYPAFF). Residues 304 to 324 (FFNFMMAVLQMLHIFWAYFIL) form a helical membrane-spanning segment. The Cytoplasmic portion of the chain corresponds to 325-380 (RMAHKFITGKLIEDERSDREETESSEGEETAAGAGAKSRLLANGHPILNNNHPKND). A disordered region spans residues 340–380 (RSDREETESSEGEETAAGAGAKSRLLANGHPILNNNHPKND). The residue at position 341 (Ser341) is a Phosphoserine. A compositionally biased stretch (acidic residues) spans 344–353 (EETESSEGEE). Thr346 carries the post-translational modification Phosphothreonine. Phosphoserine is present on residues Ser348 and Ser349.

In terms of assembly, interacts with ATP6V0C, ASGR1, ASGR2 and SLC22A1/OCT1. Interacts with ELOV1, HSD17B12 and TECR. Interacts with NDUFS2. Interacts with PAQR4; the interaction regulates the stability and activity of CERS2 and is inhibited in presence of ceramides. In terms of processing, acetylated. Deacetylation by SIRT3 increases enzyme activity and promotes mitochondrial ceramide accumulation. Post-translationally, phosphorylated at the C-terminus by CK2, leading to increase the ceramide synthase activity. As to expression, broadly expressed, with highest levels in liver and kidney. In brain is detected in neurons, oligodentrocytes, ependymal cells and epithelial cells of the choroid plexus. In kidney is detected in collecting ducts and to a lesser degree in proximal tubules.

The protein localises to the endoplasmic reticulum membrane. The catalysed reaction is a very long-chain fatty acyl-CoA + a sphingoid base = an N-(very-long-chain fatty acyl)-sphingoid base + CoA + H(+). It carries out the reaction docosanoyl-CoA + sphinganine = N-docosanoylsphinganine + CoA + H(+). It catalyses the reaction tetracosanoyl-CoA + sphinganine = N-tetracosanoylsphinganine + CoA + H(+). The enzyme catalyses hexacosanoyl-CoA + sphinganine = N-hexacosanoylsphinganine + CoA + H(+). The catalysed reaction is (15Z)-tetracosenoyl-CoA + sphinganine = N-(15Z-tetracosenoyl)-sphinganine + CoA + H(+). It carries out the reaction 2-hydroxytetracosanoyl-CoA + sphinganine = N-(2-hydroxytetracosanoyl)-sphinganine + CoA + H(+). It catalyses the reaction 2-hydroxydocosanoyl-CoA + sphinganine = N-(2-hydroxydocosanoyl)-sphinganine + CoA + H(+). The enzyme catalyses 2-hydroxytetracosenoyl-CoA + sphinganine = N-(2-hydroxytetracosenoyl)-sphinganine + CoA + H(+). The catalysed reaction is tetracosenoyl-CoA + sphinganine = an N-tetracosenoylsphinganine + CoA + H(+). It carries out the reaction hexacosenoyl-CoA + sphinganine = N-hexacosenoylsphinganine + CoA + H(+). It catalyses the reaction tetracosanoyl-CoA + sphing-4-enine = N-tetracosanoyl-sphing-4-enine + CoA + H(+). The enzyme catalyses tetracosenoyl-CoA + sphing-4-enine = N-(tetracosenoyl)-sphing-4-enine + CoA + H(+). The catalysed reaction is heptadecasphing-4-enine + tetracosanoyl-CoA = N-tetracosanoyl-heptadecasphing-4-enine + CoA + H(+). It carries out the reaction a fatty acyl-CoA + sphing-4-enine = an N-acylsphing-4-enine + CoA + H(+). It catalyses the reaction sphing-4-enine + hexadecanoyl-CoA = N-hexadecanoylsphing-4-enine + CoA + H(+). The enzyme catalyses sphing-4-enine + octadecanoyl-CoA = N-octadecanoylsphing-4-enine + CoA + H(+). The catalysed reaction is eicosanoyl-CoA + sphing-4-enine = N-eicosanoyl-sphing-4-enine + CoA + H(+). It carries out the reaction sphinganine + hexadecanoyl-CoA = N-hexadecanoylsphinganine + CoA + H(+). It catalyses the reaction sphinganine + octadecanoyl-CoA = N-(octadecanoyl)-sphinganine + CoA + H(+). The enzyme catalyses sphinganine + (9Z)-octadecenoyl-CoA = N-(9Z-octadecenoyl)-sphinganine + CoA + H(+). The catalysed reaction is eicosanoyl-CoA + sphinganine = N-eicosanoylsphinganine + CoA + H(+). It functions in the pathway lipid metabolism; sphingolipid metabolism. Its activity is regulated as follows. Ceramide synthase activity is inhibited by sphingosine-1-phosphate. Functionally, ceramide synthase that catalyzes the transfer of the acyl chain from acyl-CoA to a sphingoid base, with high selectivity toward very-long-chain fatty acyl-CoA (chain length C22-C27). N-acylates sphinganine and sphingosine bases to form dihydroceramides and ceramides in de novo synthesis and salvage pathways, respectively. Plays a non-redundant role in the synthesis of ceramides with very-long-chain fatty acids in kidney, liver and brain. Regulates the abundance of myelin-specific sphingolipids galactosylceramide and sulfatide that affects myelin sheath architecture and motor neuron functions. The chain is Ceramide synthase 2 from Mus musculus (Mouse).